We begin with the raw amino-acid sequence, 247 residues long: UPF0280 protein MmarC5_0355 (247 aa).

The protein belongs to the UPF0280 family.

In Methanococcus maripaludis (strain C5 / ATCC BAA-1333), this protein is UPF0280 protein MmarC5_0355.